We begin with the raw amino-acid sequence, 226 residues long: Glutathione peroxidase 3 (226 aa).

An N-terminal signal peptide occupies residues 1–24; it reads MARLLQASCLLSLLLAGFLPQSRG. Residue Sec73 is part of the active site. A non-standard amino acid (selenocysteine) is located at residue Sec73.

This sequence belongs to the glutathione peroxidase family. Homotetramer. As to expression, expressed intensively in the kidney and adrenal gland, and weakly in the cerebellum, heart, and lung. Secreted in plasma.

The protein localises to the secreted. The catalysed reaction is 2 glutathione + H2O2 = glutathione disulfide + 2 H2O. The enzyme catalyses tert-butyl hydroperoxide + 2 glutathione = tert-butanol + glutathione disulfide + H2O. Functionally, protects cells and enzymes from oxidative damage, by catalyzing the reduction of hydrogen peroxide, lipid peroxides and organic hydroperoxide, by glutathione. The chain is Glutathione peroxidase 3 from Macaca fuscata fuscata (Japanese macaque).